We begin with the raw amino-acid sequence, 218 residues long: N-(5'-phosphoribosyl)anthranilate isomerase (218 aa).

Belongs to the TrpF family.

The catalysed reaction is N-(5-phospho-beta-D-ribosyl)anthranilate = 1-(2-carboxyphenylamino)-1-deoxy-D-ribulose 5-phosphate. The protein operates within amino-acid biosynthesis; L-tryptophan biosynthesis; L-tryptophan from chorismate: step 3/5. This is N-(5'-phosphoribosyl)anthranilate isomerase from Bordetella pertussis (strain Tohama I / ATCC BAA-589 / NCTC 13251).